Consider the following 107-residue polypeptide: U1-lycotoxin-Ls1l (107 aa).

The signal sequence occupies residues M1–S20. A propeptide spanning residues E21–R41 is cleaved from the precursor. 4 disulfide bridges follow: C44–C59, C51–C68, C58–C86, and C70–C84.

It belongs to the neurotoxin 19 (CSTX) family. 04 (U1-Lctx) subfamily. In terms of tissue distribution, expressed by the venom gland.

Its subcellular location is the secreted. The polypeptide is U1-lycotoxin-Ls1l (Lycosa singoriensis (Wolf spider)).